A 204-amino-acid chain; its full sequence is LexA repressor (204 aa).

A DNA-binding region (H-T-H motif) is located at residues 27–47 (VREIGEAVGLASSSTVHGHLA). Active-site for autocatalytic cleavage activity residues include Ser126 and Lys164.

Belongs to the peptidase S24 family. As to quaternary structure, homodimer.

It catalyses the reaction Hydrolysis of Ala-|-Gly bond in repressor LexA.. Its function is as follows. Represses a number of genes involved in the response to DNA damage (SOS response), including recA and lexA. In the presence of single-stranded DNA, RecA interacts with LexA causing an autocatalytic cleavage which disrupts the DNA-binding part of LexA, leading to derepression of the SOS regulon and eventually DNA repair. The sequence is that of LexA repressor from Listeria welshimeri serovar 6b (strain ATCC 35897 / DSM 20650 / CCUG 15529 / CIP 8149 / NCTC 11857 / SLCC 5334 / V8).